The chain runs to 184 residues: Dynactin subunit 6 (184 aa).

It belongs to the dynactin subunits 5/6 family. Dynactin subunit 6 subfamily. As to quaternary structure, subunit of dynactin, a multiprotein complex part of a tripartite complex with dynein and a adapter, such as BICDL1, BICD2 or HOOK3. The dynactin complex is built around ACTR1A/ACTB filament and consists of an actin-related filament composed of a shoulder domain, a pointed end and a barbed end.

Its subcellular location is the cytoplasm. The protein localises to the cytoskeleton. Its function is as follows. Part of the dynactin complex that activates the molecular motor dynein for ultra-processive transport along microtubules. This chain is Dynactin subunit 6 (dctn6), found in Nematostella vectensis (Starlet sea anemone).